Consider the following 248-residue polypeptide: DnaA regulatory inactivator Hda (248 aa).

This sequence belongs to the DnaA family. HdA subfamily. As to quaternary structure, the active form seems to be an ADP-bound monomer. Forms the RIDA complex (regulatory inactivation of DnaA) of ATP-DnaA, ADP-Hda and the DNA-loaded beta sliding clamp (dnaN).

Mediates the interaction of DNA replication initiator protein DnaA with DNA polymerase subunit beta sliding clamp (dnaN). Stimulates hydrolysis of ATP-DnaA to ADP-DnaA, rendering DnaA inactive for reinitiation, a process called regulatory inhibition of DnaA or RIDA. This is DnaA regulatory inactivator Hda from Proteus mirabilis (strain HI4320).